The sequence spans 94 residues: Na(+)/H(+) antiporter subunit F (94 aa).

Helical transmembrane passes span 2 to 22 (FTLILQIALGIMAVSTFLYVI), 34 to 54 (VVALDAIGINLIAITALVSIL), and 59 to 79 (AFLDIILLLGILSFIGTIAFS).

The protein belongs to the CPA3 antiporters (TC 2.A.63) subunit F family. In terms of assembly, forms a heterooligomeric complex that consists of seven subunits: MrpA, MrpB, MrpC, MrpD, MrpE, MrpF and MrpG.

It is found in the cell membrane. Its function is as follows. Mrp complex is a Na(+)/H(+) antiporter that is considered to be the major Na(+) excretion system in B.subtilis. Has a major role in Na(+) resistance and a minor role in Na(+)- and K(+)-dependent pH homeostasis as compared to TetB. MrpA may be the actual Na(+)/H(+) antiporter, although the six other Mrp proteins are all required for Na(+)/H(+) antiport activity and Na(+) resistance. MrpA is required for initiation of sporulation when external Na(+) concentration increases. Also transports Li(+) but not K(+), Ca(2+) or Mg(2+). Functionally, involved in cholate and Na(+) efflux activities, which may be mechanistically coupled. Does not require other Mrp proteins for its own function. This Bacillus subtilis (strain 168) protein is Na(+)/H(+) antiporter subunit F (mrpF).